Reading from the N-terminus, the 208-residue chain is MSNGFQMPSSRYVLPSFIEQSAYGTKETNPYAKLFEERIIFLGTQVDDTSANDIMAQLLVLEGMDPDRDITMYINSPGGSFTALMAIYDTMQYVRPDVQTVCLGQAASAAAVLLAAGAPGKRAALPNARVLIHQPATQGTQGQVSDLEIQAAEIERMRKLMETTLSQHTGKTPEQIRIDTDRDKILTAEGALEYGIIDQVFDYRKLNT.

The Nucleophile role is filled by serine 108. The active site involves histidine 133.

The protein belongs to the peptidase S14 family. Fourteen ClpP subunits assemble into 2 heptameric rings which stack back to back to give a disk-like structure with a central cavity, resembling the structure of eukaryotic proteasomes.

It is found in the cytoplasm. It catalyses the reaction Hydrolysis of proteins to small peptides in the presence of ATP and magnesium. alpha-casein is the usual test substrate. In the absence of ATP, only oligopeptides shorter than five residues are hydrolyzed (such as succinyl-Leu-Tyr-|-NHMec, and Leu-Tyr-Leu-|-Tyr-Trp, in which cleavage of the -Tyr-|-Leu- and -Tyr-|-Trp bonds also occurs).. Functionally, cleaves peptides in various proteins in a process that requires ATP hydrolysis. Has a chymotrypsin-like activity. Plays a major role in the degradation of misfolded proteins. This Corynebacterium efficiens (strain DSM 44549 / YS-314 / AJ 12310 / JCM 11189 / NBRC 100395) protein is ATP-dependent Clp protease proteolytic subunit 1.